Consider the following 41-residue polypeptide: Large ribosomal subunit protein bL36B (41 aa).

It belongs to the bacterial ribosomal protein bL36 family.

This chain is Large ribosomal subunit protein bL36B, found in Vibrio campbellii (strain ATCC BAA-1116).